A 780-amino-acid chain; its full sequence is Nuclear cap-binding protein subunit 1 (780 aa).

Positions 1–25 are disordered; the sequence is MSSYRGSTRPRKRTREGENYGFRPH. A Phosphoserine modification is found at Ser29. Residues 34–249 enclose the MIF4G domain; that stretch reads AARIKKDITF…KQLILSREND (216 aa). A disordered region spans residues 738–780; the sequence is ANEPVQENTSEEQEDTKMQPVDAVDEQPSENNQTAADATNEEK.

It belongs to the NCBP1 family. In terms of assembly, component of the nuclear cap-binding complex (CBC), a heterodimer composed of cbc1 and cbc2 that interacts with capped RNAs.

It localises to the cytoplasm. Its subcellular location is the perinuclear region. It is found in the nucleus. Functionally, component of the CBC complex, which binds cotranscriptionally to the 5'-cap of pre-mRNAs and is involved in maturation, export and degradation of nuclear mRNAs. The protein is Nuclear cap-binding protein subunit 1 (cbc1) of Schizosaccharomyces pombe (strain 972 / ATCC 24843) (Fission yeast).